We begin with the raw amino-acid sequence, 72 residues long: Arrestin-E (72 aa).

The protein belongs to the arrestin family. As to expression, adrenal, cerebral cortex, heart, hypothalamus, intestine, liver, lung, pituitary, retina and testis.

The polypeptide is Arrestin-E (Ear) (Rattus norvegicus (Rat)).